Here is a 510-residue protein sequence, read N- to C-terminus: MNKETVVVLDFGGQYNQLIARRVRELSVYSEMLPYDTSYEEIVAKKPQAIILTGSPASVHGGEAPGCDPRVFSLGIPVLGICYGMQLMAEQMGGKVQPSSLREYGRAVLQLTGKDEIFKGLPDEMQVWMSHGDTIISLPEGFRITASTANCPVAAISCPQRRLYGVQFHPEVRHSTYGMDIIRNFLFEICGLRGDWDLSDFISEAIEEIKNKVGKKRVLCALSGGVDSSVAATLVHQAVGEQLVCVFVDNGLLRKGEASQVIDTFAKEMKMNLVFVDARERFLAKLAGITEPERKRKIIGEEFIRIFEEEKAKLGEIDYLVQGTIYPDIVESGTSTAQTIKSHHNVGGLPEDMDFQLIEPLRLLFKDEVRLVGEKLGIPAEILWRQPFPGPGLGVRVLEEVSFEKLEILREADAIVRDEIKKAGLEREIWQAFAVLPPVRSVGVMGDARTYAYPIIIRAVISEDAMTAEVARLPWELLDIMARRIVNEVAGVNRVAYDITSKPPGTIEWE.

Residues 5 to 195 (TVVVLDFGGQ…LFEICGLRGD (191 aa)) form the Glutamine amidotransferase type-1 domain. Cys-82 (nucleophile) is an active-site residue. Active-site residues include His-169 and Glu-171. In terms of domain architecture, GMPS ATP-PPase spans 196 to 385 (WDLSDFISEA…LGIPAEILWR (190 aa)). 223–229 (SGGVDSS) is a binding site for ATP.

In terms of assembly, homodimer.

It carries out the reaction XMP + L-glutamine + ATP + H2O = GMP + L-glutamate + AMP + diphosphate + 2 H(+). Its pathway is purine metabolism; GMP biosynthesis; GMP from XMP (L-Gln route): step 1/1. In terms of biological role, catalyzes the synthesis of GMP from XMP. The protein is GMP synthase [glutamine-hydrolyzing] of Syntrophomonas wolfei subsp. wolfei (strain DSM 2245B / Goettingen).